The primary structure comprises 406 residues: NAC transcription factor NAM-1 (406 aa).

Positions 1–11 (MGSPDSSSGSA) are enriched in polar residues. A disordered region spans residues 1 to 40 (MGSPDSSSGSAQKPPRHQHQHQPPPPRRQGSAPELPPGFR). Positions 35–204 (LPPGFRFHPT…DWVLCRIYKK (170 aa)) constitute an NAC domain. Residues 137-210 (VGVKKALVFY…IYKKTSKAAA (74 aa)) mediate DNA binding.

Its subcellular location is the nucleus. Transcription factor of the NAC family associated with the grain protein content (GPC). Accelerates senescence and increases nutrient remobilization from leaves to developing grains. Sequences of 11 European varieties of H.vulgare tested belongs to the same haplotype while the sequence found in H.spontaneum, an ancestor of the cultivated H.vulgare which has a higher GPC, belongs to an other haplotype. The polypeptide is NAC transcription factor NAM-1 (NAM-1) (Hordeum vulgare subsp. vulgare (Domesticated barley)).